The primary structure comprises 313 residues: HTH-type transcriptional regulator CbbR (313 aa).

Positions 1–61 constitute an HTH lysR-type domain; it reads MRNVTFRQLR…DRTRGGMVPT (61 aa). The H-T-H motif DNA-binding region spans 21–40; it reads INLAAEALGLTGPALTLQIQ.

The protein belongs to the LysR transcriptional regulatory family.

Transcriptional activator for the cbb operon for RuBisCO and other Calvin cycle genes. The chain is HTH-type transcriptional regulator CbbR (cbbR) from Rhizobium meliloti (strain 1021) (Ensifer meliloti).